Here is a 309-residue protein sequence, read N- to C-terminus: Calcium homeostasis modulator protein 5 (309 aa).

The Cytoplasmic portion of the chain corresponds to 1–15 (MDAFQSILKFFLNQK). The helical transmembrane segment at 16 to 37 (TAIGYSFMALLTVGSERLFSLV) threads the bilayer. Residues R32 and V37 each contribute to the a 1,2-diacyl-sn-glycero-3-phosphate site. Residues 38–45 (AFKCPCSI) lie on the Extracellular side of the membrane. 3 cysteine pairs are disulfide-bonded: C41/C127, C43/C158, and C142/C149. A helical membrane pass occupies residues 46–70 (ENTAYGLVFLFAPAWVLLILGFFLN). Residues 71–99 (NKAWRLFTGCCMNPQKIFPRRRCCRFFYV) are Cytoplasmic-facing. The chain crosses the membrane as a helical span at residues 100-129 (LGHITLSSLVAPVMWLSVALLNGTFYECAM). N121 provides a ligand contact to a 1,2-diacyl-sn-glycero-3-phosphate. Residues 130–174 (SGTRSTRLLEMICKGKPKECWEELHKVSCGKSSMAAMDSEEVRLS) lie on the Extracellular side of the membrane. The helical transmembrane segment at 175-200 (LQAQSQILGWCLICSASFFSLLTTCY) threads the bilayer. Residues 201–309 (ARCRSKVSYL…MILVGTAQSL (109 aa)) are Cytoplasmic-facing. R202 provides a ligand contact to a 1,2-diacyl-sn-glycero-3-phosphate.

It belongs to the CALHM family. Oligomerizes to form undecameric cone-shaped channels.

Its subcellular location is the membrane. Its function is as follows. May assemble to form large pore channels with gating and ion conductance likely regulated by membrane lipids. The protein is Calcium homeostasis modulator protein 5 of Rattus norvegicus (Rat).